Here is a 116-residue protein sequence, read N- to C-terminus: Transcriptional regulator WhiB4 (116 aa).

Positions 36–92 constitute a 4Fe-4S Wbl-type domain; sequence LCRATDPDELFVRGAAQRKAAVICRHCPVMQECGADALDNKVEFGVWGGMTERQRRA. [4Fe-4S] cluster-binding residues include cysteine 37, cysteine 59, cysteine 62, and cysteine 68.

The protein belongs to the WhiB family. [4Fe-4S] cluster serves as cofactor. Post-translationally, the Fe-S cluster can be nitrosylated by nitric oxide (NO). In terms of processing, upon Fe-S cluster removal intramolecular disulfide bonds are formed.

The protein resides in the cytoplasm. Its function is as follows. Acts as a transcriptional regulator. Probably redox-responsive. The apo- but not holo-form probably binds DNA. Plays a role in lipooligosaccharide (LOS) biosynthesis by regulating LOS gene expression. The polypeptide is Transcriptional regulator WhiB4 (whiB4) (Mycobacterium marinum (strain ATCC BAA-535 / M)).